Consider the following 446-residue polypeptide: Saccharopine dehydrogenase [NADP(+), L-glutamate-forming] (446 aa).

NADP(+) is bound by residues 10-13 (SGFV), 33-35 (CRT), 54-55 (DV), I75, 97-98 (SS), 124-126 (LDP), and S174. Residues 98 to 99 (SY) and D125 each bind L-saccharopine. L-saccharopine is bound by residues R223 and 244–246 (TLR).

The protein belongs to the saccharopine dehydrogenase family. In terms of assembly, interacts with TRM112.

It carries out the reaction L-saccharopine + NADP(+) + H2O = (S)-2-amino-6-oxohexanoate + L-glutamate + NADPH + H(+). Its pathway is amino-acid biosynthesis; L-lysine biosynthesis via AAA pathway; L-lysine from L-alpha-aminoadipate (fungal route): step 2/3. The sequence is that of Saccharopine dehydrogenase [NADP(+), L-glutamate-forming] (LYS9) from Saccharomyces cerevisiae (strain ATCC 204508 / S288c) (Baker's yeast).